A 1349-amino-acid polypeptide reads, in one-letter code: Indole-3-acetaldehyde oxidase (1349 aa).

Residues 7-94 (AAVVLAVNGK…RCSVTTSEGI (88 aa)) enclose the 2Fe-2S ferredoxin-type domain. 3 residues coordinate [2Fe-2S] cluster: Cys46, Cys51, and Cys54. One can recognise an FAD-binding PCMH-type domain in the interval 237–415 (VPVSDDGWYR…LSIFIPEWGS (179 aa)).

It belongs to the xanthine dehydrogenase family. Aldehyde oxidases (AO) are homodimers and heterodimers of AO subunits. [2Fe-2S] cluster serves as cofactor. It depends on FAD as a cofactor. Mo-molybdopterin is required as a cofactor. As to expression, mostly expressed in coleoptiles, and, to a lower extent, in mesocotyl and roots.

Its subcellular location is the cytoplasm. The enzyme catalyses indole-3-acetaldehyde + O2 + H2O = (indol-3-yl)acetate + H2O2 + H(+). Functionally, in higher plants aldehyde oxidases (AO) appear to be homo- and heterodimeric assemblies of AO subunits with probably different physiological functions. Involved in the biosynthesis of auxin. The protein is Indole-3-acetaldehyde oxidase (AO2) of Zea mays (Maize).